The following is a 241-amino-acid chain: Keratin-associated protein 5-5 (241 aa).

Tandem repeats lie at residues 35–38, 41–44, 47–50, 105–108, 115–118, 133–136, 143–146, 161–164, 171–174, 181–184, 191–194, 201–204, 211–214, 221–224, and 231–234. A 15 X 4 AA repeats of C-C-X-P region spans residues 35–234; sequence CCKPVCCCKP…CCCQSSCCAP (200 aa).

Belongs to the KRTAP type 5 family. Interacts with hair keratins.

In terms of biological role, in the hair cortex, hair keratin intermediate filaments are embedded in an interfilamentous matrix, consisting of hair keratin-associated protein (KRTAP), which are essential for the formation of a rigid and resistant hair shaft through their extensive disulfide bond cross-linking with abundant cysteine residues of hair keratins. The matrix proteins include the high-sulfur and high-glycine-tyrosine keratins. The polypeptide is Keratin-associated protein 5-5 (Mus musculus (Mouse)).